A 161-amino-acid polypeptide reads, in one-letter code: Allophycocyanin beta chain (161 aa).

Asparagine 71 carries the N4-methylasparagine modification. (2R,3E)-phycocyanobilin is bound at residue cysteine 81.

The protein belongs to the phycobiliprotein family. Heterodimer of an alpha and a beta chain. In terms of processing, contains one covalently linked phycocyanobilin chromophore.

Its subcellular location is the cellular thylakoid membrane. Light-harvesting photosynthetic bile pigment-protein from the phycobiliprotein complex. Allophycocyanin has a maximum absorption at approximately 650 nanometers. The polypeptide is Allophycocyanin beta chain (apcB) (Thermosynechococcus vestitus (strain NIES-2133 / IAM M-273 / BP-1)).